The sequence spans 228 residues: 2,3-bisphosphoglycerate-dependent phosphoglycerate mutase (228 aa).

Substrate is bound by residues 8–15 (RHGLSEWN), 21–22 (TG), R60, 87–90 (ERHY), K98, 114–115 (RR), and 183–184 (GN). The Tele-phosphohistidine intermediate role is filled by H9. The Proton donor/acceptor role is filled by E87.

The protein belongs to the phosphoglycerate mutase family. BPG-dependent PGAM subfamily.

The enzyme catalyses (2R)-2-phosphoglycerate = (2R)-3-phosphoglycerate. Its pathway is carbohydrate degradation; glycolysis; pyruvate from D-glyceraldehyde 3-phosphate: step 3/5. In terms of biological role, catalyzes the interconversion of 2-phosphoglycerate and 3-phosphoglycerate. This Enterococcus faecalis (strain ATCC 700802 / V583) protein is 2,3-bisphosphoglycerate-dependent phosphoglycerate mutase.